Here is a 377-residue protein sequence, read N- to C-terminus: RIB43A-like with coiled-coils protein 2 (377 aa).

2 coiled-coil regions span residues 217–250 (NKNQ…LRGD) and 282–308 (EEIR…RDMD).

Belongs to the RIB43A family. As to quaternary structure, microtubule inner protein component of sperm flagellar doublet microtubules. In terms of tissue distribution, expressed in trachea multiciliated cells.

It is found in the cytoplasm. The protein resides in the cytoskeleton. It localises to the cilium axoneme. Its subcellular location is the flagellum axoneme. In terms of biological role, microtubule inner protein (MIP) part of the dynein-decorated doublet microtubules (DMTs) in cilia axoneme, which is required for motile cilia beating. This chain is RIB43A-like with coiled-coils protein 2, found in Bos taurus (Bovine).